Consider the following 249-residue polypeptide: Acetylglutamate kinase (249 aa).

Residues 38–39 (GG), arginine 60, and asparagine 147 each bind substrate.

This sequence belongs to the acetylglutamate kinase family. ArgB subfamily.

The protein localises to the cytoplasm. It catalyses the reaction N-acetyl-L-glutamate + ATP = N-acetyl-L-glutamyl 5-phosphate + ADP. It participates in amino-acid biosynthesis; L-arginine biosynthesis; N(2)-acetyl-L-ornithine from L-glutamate: step 2/4. Functionally, catalyzes the ATP-dependent phosphorylation of N-acetyl-L-glutamate. In Deinococcus radiodurans (strain ATCC 13939 / DSM 20539 / JCM 16871 / CCUG 27074 / LMG 4051 / NBRC 15346 / NCIMB 9279 / VKM B-1422 / R1), this protein is Acetylglutamate kinase.